A 368-amino-acid polypeptide reads, in one-letter code: G-protein coupled receptor 62 (368 aa).

The Extracellular portion of the chain corresponds to 1 to 18 (MANSTGLNASEVAGSLGL). Asn-3 and Asn-8 each carry an N-linked (GlcNAc...) asparagine glycan. Residues 19 to 39 (ILAAVVEVGALLGNGALLVVV) traverse the membrane as a helical segment. The Cytoplasmic portion of the chain corresponds to 40-53 (LRTPGLRDALYLAH). A helical membrane pass occupies residues 54–74 (LCVVDLLAAASIMPLGLLAAP). Topologically, residues 75 to 91 (PPGLGRVRLGPAPCRAA) are extracellular. The chain crosses the membrane as a helical span at residues 92-112 (RFLSAALLPACTLGVAALGLA). Over 113–129 (RYRLIVHPLRPGSRPPP) the chain is Cytoplasmic. The chain crosses the membrane as a helical span at residues 130–150 (VLVLTAVWAAAGLLGALSLLG). The Extracellular portion of the chain corresponds to 151–177 (TPPAPPPAPARCSVLAGGLGPFRPLWA). The helical transmembrane segment at 178-198 (LLAFALPALLLLGAYGGIFVV) threads the bilayer. Residues 199 to 239 (ARRAALRPPRPARGSRLHSDSLDSRLSILPPLRPRLPGGKA) lie on the Cytoplasmic side of the membrane. Residues 240–260 (ALAPALAVGQFAACWLPYGCA) traverse the membrane as a helical segment. At 261–272 (CLAPAARAAEAE) the chain is on the extracellular side. The chain crosses the membrane as a helical span at residues 273-293 (AAVTWVAYSAFAAHPFLYGLL). Over 294 to 368 (QRPVRLALGR…YQGPPESSLS (75 aa)) the chain is Cytoplasmic. The segment at 332-368 (RPPEGPAVGPSEAPEQTPELAGGRSPAYQGPPESSLS) is disordered.

The protein belongs to the G-protein coupled receptor 1 family. Homodimers. Forms heterodimer with MTNR1B. Interacts with ARRB1 and ARRB2 in a spontaneous and agonist-independent manner; leading to the internalization of GPR62 in the endosomal compartment. As to expression, expressed in brain; detected in the basal forebrain, frontal cortex, caudate, putamen, thalamus and hippocampus.

It is found in the cell membrane. It localises to the endosome membrane. In terms of biological role, orphan G-protein coupled receptor. Constitutively activates the G(q/11)/inositol phosphate and the G(s)-alpha/cAMP signaling pathways. Has spontaneous activity for beta-arrestin recruitment. Shows a reciprocal modulation of signaling functions with the melatonin receptor MTNR1B most likely through receptor heteromerization. The sequence is that of G-protein coupled receptor 62 (GPR62) from Homo sapiens (Human).